A 178-amino-acid chain; its full sequence is Large ribosomal subunit protein bL25 (178 aa).

This sequence belongs to the bacterial ribosomal protein bL25 family. CTC subfamily. In terms of assembly, part of the 50S ribosomal subunit; part of the 5S rRNA/L5/L18/L25 subcomplex. Contacts the 5S rRNA. Binds to the 5S rRNA independently of L5 and L18.

Its function is as follows. This is one of the proteins that binds to the 5S RNA in the ribosome where it forms part of the central protuberance. The protein is Large ribosomal subunit protein bL25 of Sulfurimonas denitrificans (strain ATCC 33889 / DSM 1251) (Thiomicrospira denitrificans (strain ATCC 33889 / DSM 1251)).